The following is a 1161-amino-acid chain: MDQKLGNKFLEPDPKQNVFYRPLHFQYVSYENFISYRLKEILSVNRTLLSFKNDTEKIVLRINNIKIIPPDYSPIIASIKGKSYDALVTFTVDIRKEVMTKDGLHVSTISSYEGNDSQLIKIPLLIGYGNKNPLDNSKFVSPNIIGGVFINKQSIEKVGINIVEKTTTWPKFKIVKPNAYTFSFSSISPVNILPTKYRHYKITMDLSQLENCYISSAKTFITVNVIVLIKFLINQDLNYIKNNLTYGMPLETIYLINAIIESSKTILEAEDFNINDYIESLIESEFQKQRSITSIDDFRYDLMYNFLPHMVNSSDQLKGFYLLGLLRKFIYCIYHTSRYPDRDSMVCHRVLTYGRYFEILANDELENYITNIKNDITNSHKNKGVCNVSIHVLTTPGFNHAFSGLLSGKFKKTDGSYRTHPHYSWMQNISIPRSVGYYPDQVKISKMFSVRKYHPSQYAFFCPSDVPERGPQVGLISQLSVLTSVSNIRTTEYIDLKNAIMKYIYTYDKNDISYFQTGHIITIENDLVAAINPELVDKFVDDFKFRKRVNYFDNLEIGISNVKDHMNEIRINIGSGRLIRPFLVVYKGELVMDTIGEELEKRIDTITFSDIQKEYPHVIEMLDLEQFVFSNVCESVSKFRELSDEDKKLYDYCDFPNEFRDGYVASTLVGINHNSGPRAILGCAQAKQAISCLSSDLRNKIDNGIHLLYPERPIVLSKATETSKIAINCFGQHVLVALMSYKGMNQEDGIVVKREFIERGGLDIVTAKKHQVEIPIENFKNRERINSTAYSKLDINGLVRLNAFLEPGDAIAKNISSRTLDDDFVADNQISFDISEKYTDMYMSRVERVQVDLTDKVKVRVLTMKERRPIMGDKFTSRTSQKGTIAYIASESELPYDKNGVTPDIIINSTSIYSRKTISMLIEMILTSAYSVKPYNNNGKNRPICFPSSNETDIEYYIEFARKCYQSAIPDLDKDELENEVYCESILYDPETDKPYKTKVFMGPLYYLRLRHLTQDKATVRCRGKKTKLIRQANEGRKRGGGIKFGEMERDCLIAHGAANTITEILKDSEEDYQDVYVCENCGDIATKKNNNVYCIRCTKLNLYTVLTKIDTTHVSKVFLTQMNARGIKINLTFNEQNPLFYKPMKQIDLSPTILKNHDLS.

This sequence belongs to the RNA polymerase beta chain family. In terms of assembly, the DNA-dependent RNA polymerase used for intermediate and late genes expression consists of eight subunits (147) kDa, (133) kDa, (35) kDa, (30) kDa, (22) kDa, (19) kDa, (18) kDa and (7) kDa totalling more than 500 kDa in mass. The same holoenzyme, with the addition of the transcription-specificity factor RAP94, is used for early gene expression.

It is found in the virion. The enzyme catalyses RNA(n) + a ribonucleoside 5'-triphosphate = RNA(n+1) + diphosphate. Its function is as follows. Part of the DNA-dependent RNA polymerase which catalyzes the transcription of viral DNA into RNA using the four ribonucleoside triphosphates as substrates. Responsible for the transcription of early, intermediate and late genes. DNA-dependent RNA polymerase associates with the early transcription factor (ETF), itself composed of D6 and A7, thereby allowing the early genes transcription. Late transcription, and probably also intermediate transcription, require newly synthesized RNA polymerase. This is DNA-directed RNA polymerase 132 kDa polypeptide (RPO132) from Fowlpox virus (strain NVSL) (FPV).